The following is an 83-amino-acid chain: Hainantoxin-III 7 (83 aa).

The N-terminal stretch at 1-21 (MKASMFLALAGLVLLFVVGYA) is a signal peptide. Positions 22 to 48 (SESEEKEFPRELLSKVFAVDDFKGEER) are excised as a propeptide. 3 disulfides stabilise this stretch: Cys-50/Cys-65, Cys-57/Cys-70, and Cys-64/Cys-77. Leu-81 bears the Leucine amide mark.

The protein belongs to the neurotoxin 10 (Hwtx-1) family. 15 (Hntx-3) subfamily. Monomer. Expressed by the venom gland.

It localises to the secreted. In terms of biological role, selective antagonist of neuronal tetrodotoxin (TTX)-sensitive voltage-gated sodium channels (IC(50)=1270 nM on Nav1.1/SCN1A, 270 nM on Nav1.2/SCN2A, 491 nM on Nav1.3/SCN3A and 232 nM on Nav1.7/SCN9A). This toxin suppress Nav1.7 current amplitude without significantly altering the activation, inactivation, and repriming kinetics. Short extreme depolarizations partially activate the toxin-bound channel, indicating voltage-dependent inhibition of this toxin. This toxin increases the deactivation of the Nav1.7 current after extreme depolarizations. The toxin-Nav1.7 complex is gradually dissociated upon prolonged strong depolarizations in a voltage-dependent manner, and the unbound toxin rebinds to Nav1.7 after a long repolarization. Moreover, analysis of chimeric channels showed that the DIIS3-S4 linker is critical for toxin binding to Nav1.7. These data are consistent with this toxin interacting with Nav1.7 site 4 and trapping the domain II voltage sensor in the closed state. The protein is Hainantoxin-III 7 of Cyriopagopus hainanus (Chinese bird spider).